The chain runs to 116 residues: Large ribosomal subunit protein bL20 (116 aa).

The protein belongs to the bacterial ribosomal protein bL20 family.

In terms of biological role, binds directly to 23S ribosomal RNA and is necessary for the in vitro assembly process of the 50S ribosomal subunit. It is not involved in the protein synthesizing functions of that subunit. The chain is Large ribosomal subunit protein bL20 from Helicobacter pylori (strain HPAG1).